Reading from the N-terminus, the 174-residue chain is Adipose-secreted signaling protein (174 aa).

It belongs to the ADISSP family.

The protein localises to the secreted. In terms of biological role, may be involved in thermogenesis and glucose homeostasis. The polypeptide is Adipose-secreted signaling protein (Xenopus tropicalis (Western clawed frog)).